Reading from the N-terminus, the 476-residue chain is Serine protease HTRA4 (476 aa).

A signal peptide spans 1–31 (MIRPQLRTAGLGRCLLPGLLLLLVPVLWAGA). In terms of domain architecture, IGFBP N-terminal spans 36–109 (TQPSCPAVCQ…PGFPSTCGCP (74 aa)). 8 cysteine pairs are disulfide-bonded: Cys40-Cys66, Cys44-Cys68, Cys49-Cys69, Cys55-Cys72, Cys80-Cys94, Cys88-Cys106, Cys108-Cys127, and Cys116-Cys152. Residues 88–154 (CAPGLQCLQP…VPVQWGNCGD (67 aa)) enclose the Kazal-like domain. The segment at 202–362 (GSGFIVSEDG…IPSDRVRQFL (161 aa)) is serine protease. Residues His218, Asp248, and Ser326 each act as charge relay system in the active site. The PDZ domain maps to 383-474 (LQMLSLTVPL…NLLLTVIPET (92 aa)).

This sequence belongs to the peptidase S1C family.

It localises to the secreted. Its function is as follows. Serine protease. This chain is Serine protease HTRA4 (HTRA4), found in Homo sapiens (Human).